Consider the following 176-residue polypeptide: Inner membrane-spanning protein YciB (176 aa).

Helical transmembrane passes span 24–44 (TATA…AFRH), 49–69 (PMLW…LVLH), 76–96 (WKPT…QLAF), 119–139 (LNVV…FVAY), and 149–169 (FKLF…SLWL).

Belongs to the YciB family.

The protein resides in the cell inner membrane. Plays a role in cell envelope biogenesis, maintenance of cell envelope integrity and membrane homeostasis. The protein is Inner membrane-spanning protein YciB of Paraburkholderia xenovorans (strain LB400).